Reading from the N-terminus, the 377-residue chain is Queuine tRNA-ribosyltransferase (377 aa).

Aspartate 92 functions as the Proton acceptor in the catalytic mechanism. Substrate contacts are provided by residues 92 to 96 (DSGGF), aspartate 146, glutamine 190, and glycine 217. The RNA binding stretch occupies residues 248–254 (GVGRPED). The Nucleophile role is filled by aspartate 267. Positions 272 to 276 (TRHAR) are RNA binding; important for wobble base 34 recognition. The Zn(2+) site is built by cysteine 305, cysteine 307, cysteine 310, and histidine 337.

Belongs to the queuine tRNA-ribosyltransferase family. As to quaternary structure, homodimer. Within each dimer, one monomer is responsible for RNA recognition and catalysis, while the other monomer binds to the replacement base PreQ1. The cofactor is Zn(2+).

It catalyses the reaction 7-aminomethyl-7-carbaguanine + guanosine(34) in tRNA = 7-aminomethyl-7-carbaguanosine(34) in tRNA + guanine. The protein operates within tRNA modification; tRNA-queuosine biosynthesis. Catalyzes the base-exchange of a guanine (G) residue with the queuine precursor 7-aminomethyl-7-deazaguanine (PreQ1) at position 34 (anticodon wobble position) in tRNAs with GU(N) anticodons (tRNA-Asp, -Asn, -His and -Tyr). Catalysis occurs through a double-displacement mechanism. The nucleophile active site attacks the C1' of nucleotide 34 to detach the guanine base from the RNA, forming a covalent enzyme-RNA intermediate. The proton acceptor active site deprotonates the incoming PreQ1, allowing a nucleophilic attack on the C1' of the ribose to form the product. After dissociation, two additional enzymatic reactions on the tRNA convert PreQ1 to queuine (Q), resulting in the hypermodified nucleoside queuosine (7-(((4,5-cis-dihydroxy-2-cyclopenten-1-yl)amino)methyl)-7-deazaguanosine). This Xylella fastidiosa (strain Temecula1 / ATCC 700964) protein is Queuine tRNA-ribosyltransferase.